The chain runs to 440 residues: Putative short-chain fatty acid transporter (440 aa).

At 1–19 the chain is on the periplasmic side; it reads MIGRISRFMTRFVSRWLPD. A helical transmembrane segment spans residues 20–40; it reads PLIFAMLLTLLTFVIALWLTP. Residues 41-53 are Cytoplasmic-facing; it reads QTPISMVKMWGDG. The helical transmembrane segment at 54–74 threads the bilayer; it reads FWNLLAFGMQMALIIVTGHAL. Topologically, residues 75-102 are periplasmic; it reads ASSAPVKSLLRTAASAAKTPVQGVMLVT. A helical membrane pass occupies residues 103–123; that stretch reads FFGSVACVINWGFGLVVGAMF. The Cytoplasmic segment spans residues 124–137; sequence AREVARRVPGSDYP. Helical transmembrane passes span 138 to 158 and 159 to 179; these read LLIA…SGSM and PLLA…IPVG. D180 is a topological domain (cytoplasmic). Residues 181-201 traverse the membrane as a helical segment; sequence TLFSGFNIFITVALIVVMPFI. Residues 202 to 244 lie on the Periplasmic side of the membrane; sequence TRMMMPKPSDVVSIDPKLLMEEADFQKQLPKDAPPSERLEESR. Helical transmembrane passes span 245–265 and 266–286; these read ILTL…FSEH and GFNI…LLLH. Over 287–313 the chain is Periplasmic; the sequence is KTPMAYMRAISAAARSTAGILVQFPFY. A helical membrane pass occupies residues 314-334; the sequence is AGIQLMMEHSGLGGLITEFFI. Topologically, residues 335-351 are cytoplasmic; sequence NVANKDTFPVMTFFSSA. A helical transmembrane segment spans residues 352–372; it reads LINFAVPSGGGHWVIQGPFVI. Topologically, residues 373-394 are periplasmic; the sequence is PAAQALGADLGKSVMAIAYGEQ. Residues 395–415 traverse the membrane as a helical segment; that stretch reads WMNMAQPFWALPALAIAGLGV. Residues 416-419 lie on the Cytoplasmic side of the membrane; that stretch reads RDIM. The helical transmembrane segment at 420 to 440 threads the bilayer; sequence GYCITALLFSGVIFVIGLTLF.

Its subcellular location is the cell inner membrane. Its function is as follows. May be responsible for the uptake of short-chain fatty acids. The chain is Putative short-chain fatty acid transporter (atoE) from Escherichia coli (strain K12).